The following is a 333-amino-acid chain: L-lactate dehydrogenase B chain (333 aa).

Residues 29-57 (GQVGMACAISVLEKGLCDELALVDVLEDK) and arginine 99 each bind NAD(+). Arginine 106, asparagine 138, and arginine 169 together coordinate substrate. Residue asparagine 138 coordinates NAD(+). Residue histidine 193 is the Proton acceptor of the active site. Residue threonine 248 participates in substrate binding.

It belongs to the LDH/MDH superfamily. LDH family. In terms of assembly, homotetramer.

It localises to the cytoplasm. It carries out the reaction (S)-lactate + NAD(+) = pyruvate + NADH + H(+). The protein operates within fermentation; pyruvate fermentation to lactate; (S)-lactate from pyruvate: step 1/1. Functionally, interconverts simultaneously and stereospecifically pyruvate and lactate with concomitant interconversion of NADH and NAD(+). The protein is L-lactate dehydrogenase B chain (LDHB) of Sceloporus woodi (Florida scrub lizard).